A 155-amino-acid polypeptide reads, in one-letter code: MSRRGTAEEKTAKSDPIYRNRLVNMLVNRILKHGKKSLAYQIVYQAVKKIQQKTETNPLSVLRQAICRVTPDIAVKARRVGGSTHQVPIEIGSTQGKALAIRWLLGASRKRPGRNMAFKLSSELVDAAKGSGDAIRKKEETHRMAEANRAFAHFR.

It belongs to the universal ribosomal protein uS7 family. Part of the 30S ribosomal subunit.

It localises to the plastid. Its subcellular location is the chloroplast. One of the primary rRNA binding proteins, it binds directly to 16S rRNA where it nucleates assembly of the head domain of the 30S subunit. In Calycanthus floridus var. glaucus (Eastern sweetshrub), this protein is Small ribosomal subunit protein uS7cz/uS7cy (rps7-A).